Reading from the N-terminus, the 1084-residue chain is AP-3 complex subunit beta-1 (1084 aa).

Over residues 1-11 (MSSNSFAYNEQ) the composition is skewed to polar residues. Residues 1–26 (MSSNSFAYNEQSGGGEATELGQEATS) form a disordered region. Serine 276 and serine 609 each carry phosphoserine. The segment at 663–800 (AGKAKKENPD…KEKKTKQERN (138 aa)) is disordered. Residues 666–677 (AKKENPDKKFYS) are compositionally biased toward basic and acidic residues. Over residues 678-717 (ESEEEEDSSESSSDSESESGSESGEDEEDDRSGDSAEDSG) the composition is skewed to acidic residues. The span at 718–729 (ESGSEPEAGKGR) shows a compositional bias: low complexity. The span at 738–753 (GRGDSKDVDKEKENSK) shows a compositional bias: basic and acidic residues. Position 742 is a phosphoserine (serine 742). The segment covering 754 to 767 (TSESSSGESSSIEE) has biased composition (low complexity). The segment covering 768 to 781 (SSSDSESESESESE) has biased composition (acidic residues). The span at 782-800 (SESRKVTKEKEKKTKQERN) shows a compositional bias: basic and acidic residues.

Belongs to the adaptor complexes large subunit family. Adaptor protein complex 3 (AP-3) is a heterotetramer composed of two large adaptins (delta-type subunit AP3D1 and beta-type subunit AP3B1 or AP3B2), a medium adaptin (mu-type subunit AP3M1 or AP3M2) and a small adaptin (sigma-type subunit APS1 or AP3S2). AP-3 associates with the BLOC-1 complex. Interacts with KIF3A; interaction is direct; interaction is impaired by pyrophosphorylation of AP3B1. Post-translationally, phosphorylated on serine residues. In terms of processing, pyrophosphorylation by 5-diphosphoinositol pentakisphosphate (5-IP7) impairs interaction with KIF3A. Serine pyrophosphorylation is achieved by Mg(2+)-dependent, but enzyme independent transfer of a beta-phosphate from a inositol pyrophosphate to a pre-phosphorylated serine residue.

Its subcellular location is the cytoplasmic vesicle. It localises to the clathrin-coated vesicle membrane. The protein localises to the golgi apparatus. Subunit of non-clathrin- and clathrin-associated adaptor protein complex 3 (AP-3) that plays a role in protein sorting in the late-Golgi/trans-Golgi network (TGN) and/or endosomes. The AP complexes mediate both the recruitment of clathrin to membranes and the recognition of sorting signals within the cytosolic tails of transmembrane cargo molecules. AP-3 appears to be involved in the sorting of a subset of transmembrane proteins targeted to lysosomes and lysosome-related organelles. In concert with the BLOC-1 complex, AP-3 is required to target cargos into vesicles assembled at cell bodies for delivery into neurites and nerve terminals. The polypeptide is AP-3 complex subunit beta-1 (AP3B1) (Bos taurus (Bovine)).